The following is a 247-amino-acid chain: tRNA pseudouridine synthase A 1 (247 aa).

Asp53 (nucleophile) is an active-site residue. Tyr111 is a binding site for substrate.

The protein belongs to the tRNA pseudouridine synthase TruA family. In terms of assembly, homodimer.

The enzyme catalyses uridine(38/39/40) in tRNA = pseudouridine(38/39/40) in tRNA. Its function is as follows. Formation of pseudouridine at positions 38, 39 and 40 in the anticodon stem and loop of transfer RNAs. This is tRNA pseudouridine synthase A 1 from Bacillus cereus (strain ATCC 14579 / DSM 31 / CCUG 7414 / JCM 2152 / NBRC 15305 / NCIMB 9373 / NCTC 2599 / NRRL B-3711).